The sequence spans 277 residues: Large ribosomal subunit protein uL2 (277 aa).

2 disordered regions span residues 37 to 58 (LHSKGGRNVHGRITTRHQGGGH) and 222 to 277 (GVAM…NRRR). Basic residues predominate over residues 268–277 (VRRRKQNRRR).

It belongs to the universal ribosomal protein uL2 family. As to quaternary structure, part of the 50S ribosomal subunit. Forms a bridge to the 30S subunit in the 70S ribosome.

Functionally, one of the primary rRNA binding proteins. Required for association of the 30S and 50S subunits to form the 70S ribosome, for tRNA binding and peptide bond formation. It has been suggested to have peptidyltransferase activity; this is somewhat controversial. Makes several contacts with the 16S rRNA in the 70S ribosome. In Parafrankia sp. (strain EAN1pec), this protein is Large ribosomal subunit protein uL2.